Here is a 165-residue protein sequence, read N- to C-terminus: Type 3 secretion system regulator YopR (165 aa).

Residues 2–11 form a 5' secretion signal region; it reads TVTLNRGSIT. Positions 131–149 are 3' secretion signal; sequence PYLSELINKELMILLPYNS.

Belongs to the YopR family.

It localises to the secreted. Its function is as follows. May be involved in the regulation of the assembly of the type III secretion system (T3SS), also called injectisome, which is used to inject bacterial effector proteins into eukaryotic host cells. May control the secretion and/or polymerization of YscF/SctF, the principal component of the needle filament, thereby impacting the assembly of the T3SS. Involved in pathogenesis. Essential for the establishment of Yersinia infections in a mouse model system. The sequence is that of Type 3 secretion system regulator YopR from Yersinia enterocolitica.